Consider the following 362-residue polypeptide: Tyrosine-protein kinase SRK2 (362 aa).

Residues Thr-1–Cys-70 enclose the SH2 domain. The Protein kinase domain maps to Ile-95 to Phe-348. Residues Leu-101–Val-109 and Lys-123 each bind ATP. Asp-214 functions as the Proton acceptor in the catalytic mechanism.

This sequence belongs to the protein kinase superfamily. Tyr protein kinase family.

It localises to the cytoplasm. The enzyme catalyses L-tyrosyl-[protein] + ATP = O-phospho-L-tyrosyl-[protein] + ADP + H(+). The chain is Tyrosine-protein kinase SRK2 (SRK2) from Spongilla lacustris (Freshwater sponge).